Reading from the N-terminus, the 166-residue chain is Ribosome maturation factor RimM (166 aa).

Residues 94-165 form the PRC barrel domain; that stretch reads EGEYYLGKLI…TIELKVLDLL (72 aa).

It belongs to the RimM family. Binds ribosomal protein uS19.

The protein localises to the cytoplasm. Its function is as follows. An accessory protein needed during the final step in the assembly of 30S ribosomal subunit, possibly for assembly of the head region. Essential for efficient processing of 16S rRNA. May be needed both before and after RbfA during the maturation of 16S rRNA. It has affinity for free ribosomal 30S subunits but not for 70S ribosomes. In Borrelia garinii subsp. bavariensis (strain ATCC BAA-2496 / DSM 23469 / PBi) (Borreliella bavariensis), this protein is Ribosome maturation factor RimM.